Reading from the N-terminus, the 956-residue chain is DNA replication helicase (956 aa).

120–127 (GTAGAGKT) contributes to the ATP binding site. Residues 658–694 (PINNHVDADSSQGGQSVPVSQRMEHGQEETHDIPCLS) are disordered. Over residues 667–678 (SSQGGQSVPVSQ) the composition is skewed to low complexity. Over residues 679-694 (RMEHGQEETHDIPCLS) the composition is skewed to basic and acidic residues.

Belongs to the herpesviridae helicase family. In terms of assembly, associates with the primase and the primase-associated factor to form the helicase-primase complex.

It localises to the host nucleus. Its function is as follows. Component of the helicase/primase complex. Unwinds the DNA at the replication forks and generates single-stranded DNA for both leading and lagging strand synthesis. The primase synthesizes short RNA primers on the lagging strand that the polymerase elongates using dNTPs. Possesses helicase-like motifs and therefore may act as the helicase subunit of the complex. This is DNA replication helicase from Human cytomegalovirus (strain Merlin) (HHV-5).